A 256-amino-acid chain; its full sequence is Small ribosomal subunit protein eS1 (256 aa).

A compositionally biased stretch (basic residues) spans 1–18; the sequence is MAVGKNKRLSKGKKGIKK. Residues 1 to 20 are disordered; it reads MAVGKNKRLSKGKKGIKKRT. Ala-2 bears the N-acetylalanine; partial mark.

Belongs to the eukaryotic ribosomal protein eS1 family. In terms of assembly, component of the small ribosomal subunit. Mature ribosomes consist of a small (40S) and a large (60S) subunit. The 40S subunit contains about 33 different proteins and 1 molecule of RNA (18S). The 60S subunit contains about 49 different proteins and 3 molecules of RNA (25S, 5.8S and 5S).

It is found in the cytoplasm. The sequence is that of Small ribosomal subunit protein eS1 (rps1) from Aspergillus terreus (strain NIH 2624 / FGSC A1156).